A 327-amino-acid chain; its full sequence is Mycothiol acetyltransferase (327 aa).

2 N-acetyltransferase domains span residues 11 to 159 and 162 to 327; these read EPHG…VTLP and VQIR…EGTS. Glu42 is a 1D-myo-inositol 2-(L-cysteinylamino)-2-deoxy-alpha-D-glucopyranoside binding site. Position 89–91 (89–91) interacts with acetyl-CoA; that stretch reads LVI. 1D-myo-inositol 2-(L-cysteinylamino)-2-deoxy-alpha-D-glucopyranoside-binding residues include Glu189, Lys228, and Glu251. Acetyl-CoA contacts are provided by residues 255–257 and 262–268; these read LGV and QGLGLGR. Tyr289 contributes to the 1D-myo-inositol 2-(L-cysteinylamino)-2-deoxy-alpha-D-glucopyranoside binding site. Residue 294-299 coordinates acetyl-CoA; the sequence is NAPAIR.

The protein belongs to the acetyltransferase family. MshD subfamily. Monomer.

The enzyme catalyses 1D-myo-inositol 2-(L-cysteinylamino)-2-deoxy-alpha-D-glucopyranoside + acetyl-CoA = mycothiol + CoA + H(+). Its function is as follows. Catalyzes the transfer of acetyl from acetyl-CoA to desacetylmycothiol (Cys-GlcN-Ins) to form mycothiol. The sequence is that of Mycothiol acetyltransferase from Acidothermus cellulolyticus (strain ATCC 43068 / DSM 8971 / 11B).